Reading from the N-terminus, the 206-residue chain is MELKVTTLEGKDAGSVQLSDAIFGLEPRVDIIQRCVQWQLNKRQAGTHKAKGRAEIWRTGKKMYKQKGTGGARHGSARVPQFRGGGRAFGPVVRSHATDLPKKVRALALKHALSAKAKDGDLVVLENATLEAAKTKALIGHFSGLGLTNALIIDGAELHNGFAAAARNIPNLDVLPIQGINVYDILRRQKLVLTKAAIDALEARFK.

This sequence belongs to the universal ribosomal protein uL4 family. Part of the 50S ribosomal subunit.

One of the primary rRNA binding proteins, this protein initially binds near the 5'-end of the 23S rRNA. It is important during the early stages of 50S assembly. It makes multiple contacts with different domains of the 23S rRNA in the assembled 50S subunit and ribosome. Functionally, forms part of the polypeptide exit tunnel. This is Large ribosomal subunit protein uL4 from Bradyrhizobium sp. (strain BTAi1 / ATCC BAA-1182).